A 134-amino-acid chain; its full sequence is Small ribosomal subunit protein uS9c (134 aa).

It belongs to the universal ribosomal protein uS9 family.

It is found in the plastid. It localises to the chloroplast. The protein is Small ribosomal subunit protein uS9c (rps9) of Thalassiosira pseudonana (Marine diatom).